Reading from the N-terminus, the 538-residue chain is Thiamine transport system permease protein ThiP (538 aa).

12 helical membrane passes run 19-39, 57-77, 97-117, 141-161, 202-222, 242-262, 293-313, 337-357, 376-396, 406-426, 466-486, and 509-529; these read VVVI…IFAL, LILF…FFGL, LMSL…IGIY, LSGI…QLFL, FSLI…LGGG, LPKA…LFSL, ILVL…ILIS, LSIA…LLLL, AGMV…FLLL, LFII…LRIL, YAFA…ALFG, and AAVT…FIHT. The ABC transmembrane type-1 1 domain maps to 58-263; that stretch reads ILFSFGQALL…VFCLILFSLT (206 aa). The ABC transmembrane type-1 2 domain maps to 333–528; that stretch reads LGYSLSIAPL…LCGILFAFIH (196 aa).

Belongs to the binding-protein-dependent transport system permease family. CysTW subfamily. In terms of assembly, the complex is composed of two ATP-binding proteins (ThiQ), two transmembrane proteins (ThiP) and a solute-binding protein (ThiB).

It is found in the cell inner membrane. Functionally, part of the ABC transporter complex ThiBPQ involved in thiamine import. Probably responsible for the translocation of the substrate across the membrane. The polypeptide is Thiamine transport system permease protein ThiP (thiP) (Haemophilus influenzae (strain ATCC 51907 / DSM 11121 / KW20 / Rd)).